The following is a 97-amino-acid chain: Aspartyl/glutamyl-tRNA(Asn/Gln) amidotransferase subunit C (97 aa).

Belongs to the GatC family. In terms of assembly, heterotrimer of A, B and C subunits.

It carries out the reaction L-glutamyl-tRNA(Gln) + L-glutamine + ATP + H2O = L-glutaminyl-tRNA(Gln) + L-glutamate + ADP + phosphate + H(+). The enzyme catalyses L-aspartyl-tRNA(Asn) + L-glutamine + ATP + H2O = L-asparaginyl-tRNA(Asn) + L-glutamate + ADP + phosphate + 2 H(+). Its function is as follows. Allows the formation of correctly charged Asn-tRNA(Asn) or Gln-tRNA(Gln) through the transamidation of misacylated Asp-tRNA(Asn) or Glu-tRNA(Gln) in organisms which lack either or both of asparaginyl-tRNA or glutaminyl-tRNA synthetases. The reaction takes place in the presence of glutamine and ATP through an activated phospho-Asp-tRNA(Asn) or phospho-Glu-tRNA(Gln). The chain is Aspartyl/glutamyl-tRNA(Asn/Gln) amidotransferase subunit C from Sulfolobus acidocaldarius (strain ATCC 33909 / DSM 639 / JCM 8929 / NBRC 15157 / NCIMB 11770).